The chain runs to 106 residues: MSVIKKNIPAIGLCICAFFIHSAVGQQTVQGGVIHFRGAIVEPLCDISTHAENIDLTCLREGKKQMHRIDLRQASGLPQDIQSIATVRLHYLDAQKSLAVMNIEYR.

Residues 1 to 25 (MSVIKKNIPAIGLCICAFFIHSAVG) form the signal peptide.

This sequence to the N-terminal of the FimA/PapA family of fimbria proteins.

This is an uncharacterized protein from Salmonella typhi.